Here is a 223-residue protein sequence, read N- to C-terminus: Cytochrome c biogenesis ATP-binding export protein CcmA (223 aa).

The 223-residue stretch at 1–223 folds into the ABC transporter domain; that stretch reads MRSLACERDE…KSDMAVGNDY (223 aa). Residue 31–38 participates in ATP binding; the sequence is GSNGAGKT.

This sequence belongs to the ABC transporter superfamily. CcmA exporter (TC 3.A.1.107) family. In terms of assembly, the complex is composed of two ATP-binding proteins (CcmA) and two transmembrane proteins (CcmB).

The protein resides in the cell inner membrane. The enzyme catalyses heme b(in) + ATP + H2O = heme b(out) + ADP + phosphate + H(+). Functionally, part of the ABC transporter complex CcmAB involved in the biogenesis of c-type cytochromes; once thought to export heme, this seems not to be the case, but its exact role is uncertain. Responsible for energy coupling to the transport system. The polypeptide is Cytochrome c biogenesis ATP-binding export protein CcmA (Saccharophagus degradans (strain 2-40 / ATCC 43961 / DSM 17024)).